The following is a 356-amino-acid chain: Alanine racemase, catabolic (356 aa).

Lysine 35 acts as the Proton acceptor; specific for D-alanine in catalysis. The residue at position 35 (lysine 35) is an N6-(pyridoxal phosphate)lysine. Arginine 130 is a substrate binding site. Residue tyrosine 253 is the Proton acceptor; specific for L-alanine of the active site. Residue methionine 301 coordinates substrate.

This sequence belongs to the alanine racemase family. Pyridoxal 5'-phosphate is required as a cofactor.

It carries out the reaction L-alanine = D-alanine. Functionally, isomerizes L-alanine to D-alanine which is then oxidized to pyruvate by DadA. The protein is Alanine racemase, catabolic (dadX) of Escherichia coli (strain K12).